A 94-amino-acid chain; its full sequence is DNA-directed RNA polymerase subunit Rpo11 (94 aa).

This sequence belongs to the archaeal Rpo11/eukaryotic RPB11/RPC19 RNA polymerase subunit family. Part of the RNA polymerase complex.

The protein localises to the cytoplasm. It carries out the reaction RNA(n) + a ribonucleoside 5'-triphosphate = RNA(n+1) + diphosphate. In terms of biological role, DNA-dependent RNA polymerase (RNAP) catalyzes the transcription of DNA into RNA using the four ribonucleoside triphosphates as substrates. In Natronomonas pharaonis (strain ATCC 35678 / DSM 2160 / CIP 103997 / JCM 8858 / NBRC 14720 / NCIMB 2260 / Gabara) (Halobacterium pharaonis), this protein is DNA-directed RNA polymerase subunit Rpo11.